The sequence spans 290 residues: uncharacterized protein (290 aa).

7 consecutive transmembrane segments (helical) span residues 40–60 (MHVI…SPVI), 80–100 (DAHV…YTCL), 110–130 (LFGY…YFVW), 139–159 (VHIT…VITF), 166–188 (MYYG…HYFL), 200–220 (MING…WGWF), and 238–260 (WALS…FWVS). The TLC domain occupies 74-271 (KTRLNWDAHV…MIDAIRRRAH (198 aa)).

It is found in the endoplasmic reticulum membrane. This is an uncharacterized protein from Schizosaccharomyces pombe (strain 972 / ATCC 24843) (Fission yeast).